A 395-amino-acid chain; its full sequence is Argininosuccinate synthase (395 aa).

8–16 (AYSGGLDTS) provides a ligand contact to ATP. Residue tyrosine 86 coordinates L-citrulline. Position 116 (glycine 116) interacts with ATP. Threonine 118, asparagine 122, and aspartate 123 together coordinate L-aspartate. Asparagine 122 contributes to the L-citrulline binding site. L-citrulline is bound by residues arginine 126, serine 173, serine 182, glutamate 257, and tyrosine 269.

Belongs to the argininosuccinate synthase family. Type 1 subfamily. As to quaternary structure, homotetramer.

It is found in the cytoplasm. It catalyses the reaction L-citrulline + L-aspartate + ATP = 2-(N(omega)-L-arginino)succinate + AMP + diphosphate + H(+). Its pathway is amino-acid biosynthesis; L-arginine biosynthesis; L-arginine from L-ornithine and carbamoyl phosphate: step 2/3. In Methanocaldococcus jannaschii (strain ATCC 43067 / DSM 2661 / JAL-1 / JCM 10045 / NBRC 100440) (Methanococcus jannaschii), this protein is Argininosuccinate synthase.